Here is a 99-residue protein sequence, read N- to C-terminus: RNA-binding protein Hfq (99 aa).

In terms of domain architecture, Sm spans 9 to 68 (DPFLNALRRERVPVSIYLVNGIKLQGQIESFDQFVILLKNTVSQMVYKHAISTVVPSRPV). A disordered region spans residues 64-99 (PSRPVSHHSNNPGGGSNYHGNNTAASQQSQEADDAE).

Belongs to the Hfq family. In terms of assembly, homohexamer.

RNA chaperone that binds small regulatory RNA (sRNAs) and mRNAs to facilitate mRNA translational regulation in response to envelope stress, environmental stress and changes in metabolite concentrations. Also binds with high specificity to tRNAs. The chain is RNA-binding protein Hfq from Pectobacterium carotovorum subsp. carotovorum (strain PC1).